The primary structure comprises 179 residues: Ribosome maturation factor RimM (179 aa).

A PRC barrel domain is found at 102-179; that stretch reads DGEYYWYQLE…EMKVDWDADF (78 aa).

It belongs to the RimM family. As to quaternary structure, binds ribosomal protein uS19.

Its subcellular location is the cytoplasm. In terms of biological role, an accessory protein needed during the final step in the assembly of 30S ribosomal subunit, possibly for assembly of the head region. Essential for efficient processing of 16S rRNA. May be needed both before and after RbfA during the maturation of 16S rRNA. It has affinity for free ribosomal 30S subunits but not for 70S ribosomes. In Pseudomonas syringae pv. syringae (strain B728a), this protein is Ribosome maturation factor RimM.